A 103-amino-acid polypeptide reads, in one-letter code: MYAVIVTGGKQYKVAEGEFLKIEKLEVGTGESVTFDRVLLVGNGDDVKIGAPVVDGAKVTAEVVGQGRHDKVSIIKFRRRKHHMKHQGHRQWFTEVKITGIQA.

Belongs to the bacterial ribosomal protein bL21 family. Part of the 50S ribosomal subunit. Contacts protein L20.

In terms of biological role, this protein binds to 23S rRNA in the presence of protein L20. The chain is Large ribosomal subunit protein bL21 from Azotobacter vinelandii (strain DJ / ATCC BAA-1303).